Reading from the N-terminus, the 560-residue chain is Membrane protein insertase YidC (560 aa).

A helical transmembrane segment spans residues 1-21 (MDIKRTILIAALAIVSYVMVL). The tract at residues 42–66 (VAPGLPDGVPAANNGASADVPSANA) is disordered. A run of 5 helical transmembrane segments spans residues 341-361 (LELT…FWLL), 367-387 (LLGN…GLFF), 437-457 (LGGC…YWVL), 468-488 (WMLW…PIIM), and 515-535 (PIIF…YWVV).

This sequence belongs to the OXA1/ALB3/YidC family. Type 1 subfamily. In terms of assembly, interacts with the Sec translocase complex via SecD. Specifically interacts with transmembrane segments of nascent integral membrane proteins during membrane integration.

The protein resides in the cell inner membrane. Its function is as follows. Required for the insertion and/or proper folding and/or complex formation of integral membrane proteins into the membrane. Involved in integration of membrane proteins that insert both dependently and independently of the Sec translocase complex, as well as at least some lipoproteins. Aids folding of multispanning membrane proteins. This chain is Membrane protein insertase YidC, found in Pseudomonas putida (strain W619).